Here is a 213-residue protein sequence, read N- to C-terminus: Imidazole glycerol phosphate synthase subunit HisH (213 aa).

The region spanning 3-213 (MIGVIDYGMG…VGIVTGRENG (211 aa)) is the Glutamine amidotransferase type-1 domain. C81 (nucleophile) is an active-site residue. Catalysis depends on residues H188 and E190.

In terms of assembly, heterodimer of HisH and HisF.

Its subcellular location is the cytoplasm. It catalyses the reaction 5-[(5-phospho-1-deoxy-D-ribulos-1-ylimino)methylamino]-1-(5-phospho-beta-D-ribosyl)imidazole-4-carboxamide + L-glutamine = D-erythro-1-(imidazol-4-yl)glycerol 3-phosphate + 5-amino-1-(5-phospho-beta-D-ribosyl)imidazole-4-carboxamide + L-glutamate + H(+). The catalysed reaction is L-glutamine + H2O = L-glutamate + NH4(+). It functions in the pathway amino-acid biosynthesis; L-histidine biosynthesis; L-histidine from 5-phospho-alpha-D-ribose 1-diphosphate: step 5/9. In terms of biological role, IGPS catalyzes the conversion of PRFAR and glutamine to IGP, AICAR and glutamate. The HisH subunit catalyzes the hydrolysis of glutamine to glutamate and ammonia as part of the synthesis of IGP and AICAR. The resulting ammonia molecule is channeled to the active site of HisF. In Geobacillus thermodenitrificans (strain NG80-2), this protein is Imidazole glycerol phosphate synthase subunit HisH.